Reading from the N-terminus, the 544-residue chain is WD repeat-containing protein 25 (544 aa).

Disordered regions lie at residues 17 to 74 (DSDS…EDPG) and 183 to 208 (QRQA…GRAP). Polar residues predominate over residues 30–39 (FNATGQQKDT). WD repeat units follow at residues 244 to 286 (GHRG…HCLQ), 290 to 329 (LHTE…QLFS), 330 to 373 (GRSD…RSYK), 375 to 420 (TIQQ…KISN), 424 to 463 (HERF…RMSR), 469 to 510 (GHKV…RACT), and 513 to 544 (GHTQ…KIWH).

In terms of tissue distribution, expressed in heart, muscle, testis, ovary, uterus and prostate.

This Homo sapiens (Human) protein is WD repeat-containing protein 25.